Here is a 126-residue protein sequence, read N- to C-terminus: uncharacterized protein (126 aa).

A helical transmembrane segment spans residues 5-25; sequence LIQHITSIFVFSFFFLFFFFS.

The protein resides in the membrane. This is an uncharacterized protein from Saccharomyces cerevisiae (strain ATCC 204508 / S288c) (Baker's yeast).